The chain runs to 365 residues: Heme A synthase (365 aa).

8 helical membrane-spanning segments follow: residues 17 to 37 (AVRIWLTVVAALIAVMVLVGG), 107 to 127 (VIGIAYLLPFLWFLWRGAIGP), 132 to 152 (ALWGIFALGALQGAVGWWMVA), 164 to 184 (VRLAVHLTLALIIYAAIVWTL), 203 to 223 (AIALLALTLLQLFLGALVAGL), 264 to 283 (QFDHRMMAYALWALAAWHAI), 296 to 316 (GALWLFAALSLQAVLGILTVL), and 320 to 340 (PIGLALAHQAVGIVVLTLAVL). Histidine 267 is a binding site for heme. Residue histidine 327 participates in heme binding.

Belongs to the COX15/CtaA family. Type 2 subfamily. Interacts with CtaB. Requires heme b as cofactor.

Its subcellular location is the cell membrane. The catalysed reaction is Fe(II)-heme o + 2 A + H2O = Fe(II)-heme a + 2 AH2. The protein operates within porphyrin-containing compound metabolism; heme A biosynthesis; heme A from heme O: step 1/1. Catalyzes the conversion of heme O to heme A by two successive hydroxylations of the methyl group at C8. The first hydroxylation forms heme I, the second hydroxylation results in an unstable dihydroxymethyl group, which spontaneously dehydrates, resulting in the formyl group of heme A. This chain is Heme A synthase, found in Rhodopseudomonas palustris (strain HaA2).